The following is a 467-amino-acid chain: H(+)/Cl(-) exchange transporter ClcA (467 aa).

Over 1–30 (MKSQTIPTRRVRGFRRAAVIRQLLSRDKTP) the chain is Cytoplasmic. Residues 31–67 (LTILLLASLTGVLAGLAGVAFEKAVAWVTAHRIEGLA) traverse the membrane as a helical segment. Residues 68 to 74 (QVAHIPW) lie on the Periplasmic side of the membrane. A helical membrane pass occupies residues 75–98 (LVWLLAFLFSALLAMVGYFLVRRF). Over 99-106 (APEAGGSG) the chain is Cytoplasmic. The Selectivity filter part_1 motif lies at 104-108 (GSGIP). Serine 105 contributes to the chloride binding site. An intramembrane region (helical) is located at residues 107-114 (IPEIEGAL). The Cytoplasmic segment spans residues 115–121 (EELRPVR). A helical transmembrane segment spans residues 122 to 139 (WWRVLPVKFFGGMGTLGA). The Periplasmic segment spans residues 140-145 (GMVLGR). The Selectivity filter part_2 motif lies at 144–148 (GREGP). Residues 146–164 (EGPMVQMGGNIGRMVLDIF) form a helical membrane-spanning segment. Residues 165–174 (HRPDAEARHT) are Cytoplasmic-facing. Intramembrane regions (helical) lie at residues 175–187 (LLAT…LAAA) and 191–199 (PLAGILFII). Over 200–212 (EEMRTQFHYNLIS) the chain is Cytoplasmic. The chain crosses the membrane as a helical span at residues 213–230 (IKAVFTGVIMSTIVFRIF). Topologically, residues 231 to 250 (NGEKSVIEVGQLTDAPVYTL) are periplasmic. A helical transmembrane segment spans residues 251-279 (WLYLLLGIIFGAVGPLFNRLVLGMQDVFA). Over 280–285 (RIHGGN) the chain is Cytoplasmic. A helical membrane pass occupies residues 286–307 (TTRWVLLGGAIGGACGLLALWE). Topologically, residues 308–327 (PAAAGGGFGLIPIAAAGNFT) are periplasmic. A helical transmembrane segment spans residues 328-347 (VGMLLFIFIARVVTTVFCFS). Residues 348–352 (SGAPG) lie on the Cytoplasmic side of the membrane. The Selectivity filter part_3 signature appears at 353-357 (GIFAP). The helical transmembrane segment at 353-374 (GIFAPMLALGTLLGSAFGMACA) threads the bilayer. Chloride-binding residues include isoleucine 354 and phenylalanine 355. The Periplasmic segment spans residues 375–384 (AWFPQWHLQA). Positions 385–399 (GTFAIAGMGALLAAS) form an intramembrane region, helical. An intramembrane region (note=Loop between two helices) is located at residues 400-402 (VRA). Residues 403 to 414 (PITGIVLVLEMT) constitute an intramembrane region (helical). The segment at residues 415 to 419 (DNYQL) is an intramembrane region (note=Loop between two helices). A helical membrane pass occupies residues 420–436 (ILPMIITCLGATLLAQF). Over 437–467 (LGGKPLYSTILARTLAKQEAERQAQADGRNT) the chain is Cytoplasmic. Tyrosine 443 is a binding site for chloride.

It belongs to the chloride channel (TC 2.A.49) family. ClcA subfamily. In terms of assembly, homodimer.

The protein resides in the cell inner membrane. It catalyses the reaction 2 chloride(in) + H(+)(out) = 2 chloride(out) + H(+)(in). Its function is as follows. Proton-coupled chloride transporter. Functions as antiport system and exchanges two chloride ions for 1 proton. Probably acts as an electrical shunt for an outwardly-directed proton pump that is linked to amino acid decarboxylation, as part of the extreme acid resistance (XAR) response. In Cronobacter sakazakii (strain ATCC BAA-894) (Enterobacter sakazakii), this protein is H(+)/Cl(-) exchange transporter ClcA.